The chain runs to 341 residues: Serpentine receptor class beta-3 (341 aa).

The Extracellular portion of the chain corresponds to 1–23 (MLETNDSVCELAYQLAYHPVYRS). Asn5 is a glycosylation site (N-linked (GlcNAc...) asparagine). Residues 24–44 (SQFWSMLVSSLSIPALIYFIT) form a helical membrane-spanning segment. Residues 45 to 58 (RKIFFLHFHGNLKC) are Cytoplasmic-facing. Residues 59–79 (LLIVYFICNLLFSMALCFAFF) form a helical membrane-spanning segment. Over 80–103 (YQFLIPFFVTSKCQLLINTTLFKW) the chain is Extracellular. N-linked (GlcNAc...) asparagine glycosylation is present at Asn97. A helical transmembrane segment spans residues 104 to 124 (GQICSFLLLTSSMLLPIGFSI). Topologically, residues 125-141 (ERFVALGNAQKYESSRT) are cytoplasmic. A helical membrane pass occupies residues 142–162 (FLGPVIIFIIIAVDFSIIFSV). Topologically, residues 163–187 (YKNEPFTEGFYSFILVPSTTASQIN) are extracellular. A helical transmembrane segment spans residues 188-208 (MYFFVLLFVKIFNLLLNCILL). The Cytoplasmic portion of the chain corresponds to 209-237 (RIHKKIRIKYYSLSVRYEMEEILQSSKFT). Residues 238–258 (FIIRFTHLLFFGFYVVVILFV) traverse the membrane as a helical segment. Over 259 to 276 (RIMGESFFNGTLNYSVAR) the chain is Extracellular. N-linked (GlcNAc...) asparagine glycosylation is found at Asn267 and Asn271. A helical transmembrane segment spans residues 277 to 297 (GVFCTVPTYNLIIVIIGIKSL). At 298-341 (RHLNLQRLNKVQSTVQIKSTGKEGSKNYEDIITNYWDSVSSRTP) the chain is on the cytoplasmic side.

Belongs to the nematode receptor-like protein srb family. As to expression, expressed throughout the head.

Its subcellular location is the cell membrane. It is found in the perikaryon. The protein localises to the cell projection. The protein resides in the dendrite. In terms of biological role, G-protein coupled receptor. The sequence is that of Serpentine receptor class beta-3 from Caenorhabditis elegans.